The chain runs to 901 residues: Bifunctional protein STORR (901 aa).

A helical transmembrane segment spans residues Thr-12 to Leu-32. Residue Cys-513 participates in heme binding.

The protein in the N-terminal section; belongs to the cytochrome P450 family. This sequence in the C-terminal section; belongs to the aldo/keto reductase family. Heme is required as a cofactor.

The protein resides in the membrane. The catalysed reaction is (R)-reticuline + NADP(+) = 1,2-dehydroreticuline + NADPH + H(+). It catalyses the reaction (S)-reticuline + reduced [NADPH--hemoprotein reductase] + O2 = 1,2-dehydroreticuline + oxidized [NADPH--hemoprotein reductase] + 2 H2O + H(+). It functions in the pathway alkaloid biosynthesis; morphine biosynthesis. Bifunctional protein involved in the biosynthesis of morphinan-type benzylisoquinoline alkaloids. Required for the isomerization of (S)- to (R)-reticuline. The cytochrome P450 module is responsible for the conversion of (S)-reticuline to 1,2-dehydroreticuline while the oxidoreductase module converts 1,2-dehydroreticuline to (R)-reticuline. This chain is Bifunctional protein STORR, found in Papaver somniferum (Opium poppy).